Here is a 479-residue protein sequence, read N- to C-terminus: Protein phosphatase 1B (479 aa).

The span at 1–14 (MGAFLDKPKTEKHN) shows a compositional bias: basic and acidic residues. The interval 1–20 (MGAFLDKPKTEKHNAHGAGN) is disordered. Gly2 is lipidated: N-myristoyl glycine. Residue Lys12 forms a Glycyl lysine isopeptide (Lys-Gly) (interchain with G-Cter in ISG15) linkage. Positions 23–295 (RYGLSSMQGW…DNMSIVLVCF (273 aa)) constitute a PPM-type phosphatase domain. Mn(2+)-binding residues include Asp60 and Gly61. Lys142 is covalently cross-linked (Glycyl lysine isopeptide (Lys-Gly) (interchain with G-Cter in ISG15)). The Mn(2+) site is built by Asp243 and Asp286. Ser386 is modified (phosphoserine). The segment at 423–479 (VEGEESPAEPAATATSSNSDAGNPVTMQESHTESESGLAELDSSNEDAGTKMSGEKI) is disordered. A compositionally biased stretch (low complexity) spans 430 to 439 (AEPAATATSS). Positions 440–451 (NSDAGNPVTMQE) are enriched in polar residues.

It belongs to the PP2C family. As to quaternary structure, monomer. Interacts with PAK6. Interacts with the phosphorylated form of IKBKB/IKKB. Requires Mg(2+) as cofactor. The cofactor is Mn(2+). Post-translationally, isgylation negatively regulates its activity. N-myristoylation is essential for the recognition of its substrates for dephosphorylation. As to expression, highly expressed in heart and skeletal muscle.

The protein localises to the cytoplasm. It localises to the cytosol. The protein resides in the membrane. The enzyme catalyses O-phospho-L-seryl-[protein] + H2O = L-seryl-[protein] + phosphate. The catalysed reaction is O-phospho-L-threonyl-[protein] + H2O = L-threonyl-[protein] + phosphate. Its function is as follows. Enzyme with a broad specificity. Dephosphorylates CDK2 and CDK6 in vitro. Dephosphorylates PRKAA1 and PRKAA2. Inhibits TBK1-mediated antiviral signaling by dephosphorylating it at 'Ser-172'. Plays an important role in the termination of TNF-alpha-mediated NF-kappa-B activation through dephosphorylating and inactivating IKBKB/IKKB. The chain is Protein phosphatase 1B (PPM1B) from Homo sapiens (Human).